Reading from the N-terminus, the 460-residue chain is MGFVGRKVVVLGLGRSGLASARALREGGAEALCWDDGEAGRARAAAEGFTIHDPIRDGLDGVACLVTSPGIPHLYSTPHRAIVAAYAAGVPVDNDIGLFFRSLGQGDWAFHDTPPRVVAVTGSNGKSTTSALIAHILEEAGTPVQLAGNIGRGVLDIEPPIDGEVIVIELSSYQTELARALTPDIAVFTNLSADHLERHGGMGGYFAAKRRLFSEGGPERAVIGVDEIEGQYLAGQLVEGPEDGRLIRVSSGKLSGPGWDVSTRKGWLSEFRKGRQAASIDLRGVPGLPGAHNHQNAACAYGVCRALGLAPRVIEAAFATFEGLPHRSQRVAEINGVFYVNDSKATNVDAATKALGAFKRIRWICGGLEKDGGLEALWEAAGHVAKAYVIGREAEAFALHLGDIPKDVCGDMATAVARASADAQPGDTVLLAPAAASFDQYDSFETRGADFIAQVEKLQS.

Residue 122-128 (GSNGKST) participates in ATP binding.

It belongs to the MurCDEF family.

It is found in the cytoplasm. The catalysed reaction is UDP-N-acetyl-alpha-D-muramoyl-L-alanine + D-glutamate + ATP = UDP-N-acetyl-alpha-D-muramoyl-L-alanyl-D-glutamate + ADP + phosphate + H(+). Its pathway is cell wall biogenesis; peptidoglycan biosynthesis. Its function is as follows. Cell wall formation. Catalyzes the addition of glutamate to the nucleotide precursor UDP-N-acetylmuramoyl-L-alanine (UMA). This chain is UDP-N-acetylmuramoylalanine--D-glutamate ligase, found in Jannaschia sp. (strain CCS1).